Consider the following 242-residue polypeptide: 2-amino-5-formylamino-6-ribosylaminopyrimidin-4(3H)-one 5'-monophosphate deformylase (242 aa).

Fe cation is bound by residues E46, H48, D57, and H125.

Belongs to the creatininase superfamily. FAPy deformylase family. In terms of assembly, homodimer. The cofactor is Fe(2+). Zn(2+) is required as a cofactor.

It carries out the reaction 2-amino-5-formylamino-6-(5-phospho-D-ribosylamino)pyrimidin-4(3H)-one + H2O = 2,5-diamino-6-(1-D-ribosylamino)pyrimidin-4(3H)-one 5'-phosphate + formate + H(+). It functions in the pathway cofactor biosynthesis; coenzyme F420 biosynthesis. The protein operates within cofactor biosynthesis; riboflavin biosynthesis. Catalyzes the hydrolysis of the formamide of 2-amino-5-formylamino-6-ribosylamino-4(3H)-pyrimidinone 5'-monophosphate (FAPy) to form 2,5-diamino-6-ribosylamino-4(3H)-pyrimidinone 5'-phosphate (APy). This chain is 2-amino-5-formylamino-6-ribosylaminopyrimidin-4(3H)-one 5'-monophosphate deformylase, found in Methanococcus aeolicus (strain ATCC BAA-1280 / DSM 17508 / OCM 812 / Nankai-3).